The primary structure comprises 1420 residues: MTTDVQFSSQEIELFRVKEFLIANNPAKINNENKDAVLTQIEHDFRYLIQYIKDGLPNLNESTRLIFPDTFSICLLRSHQIIASKKIDSQEFLSAVKEQLLTEANANIIFEYVLDFWADGGAPLMNALRDLFSKLLNLLKITYPMSTLKDVLFNWMNEILEVPSTLRVQYYLIDALSSDFDLYYIIEKKPHFIDNSFSLMNSDLLANSVGKCIVSLLLNIYEKHFKKNESFVQEWIQLWKSCALKYIHDKQYTKSINLYIMIPLFKNMPNSAFTLFLECMSNKDPSLLLSLLKIGQELGIEEEPFCDNKYTTVDSVNKLIEQDEYKLQVFEILTFSTKKSKPIRPFVFKTIKQYLYVFFVDTELERRNYFCSSMKHFIFRTRDCAYSLARDARKLKKAEKFPDEQREKLAQVEEARAFLVWLCNFIKYNLAPGTLYQANVTSLKLMHILIKSGVDKSTPQKFLDNQNKREYPFSIPILQDVTFLRLLIDLLVSNYADVRELSKEMLFIMISADESRGLFLDTLDANALKWTATSLLSDYEKGDAGATVYEFIFTVMGSQRSFIDQTIDILAQMVQNLQNDSIGCAENSIGPHFAALSLILNKFNSEENHQDTSKIISKLINLVLKSWEATRNVVCHDSAHGILPEKYANCGVPDQVIISHAFRAIKEASYLLETILKKYPLTRDQLDSIGDLFIVQLSTIRHSGAFQAVLPGLKAFCIRCQLEFPAILEELLSKSVKSLKSKTQHITRRSGGLPFLVTTVLSAEVTKGRPLLQKTFENLLLVARLPIPPHQDEFDLPQVNAINCINAIFVEPKLSVHCTSFVSEALELALLNFDCDIWALRNCSIMLFTSLQNRIFGKVGRSVSAKLFFTKYSGLRQLLLNILNSSIAQYSGSERKSYQIESIFLVLNVLLRLRPTAGYTGLKEFNVSVYECLSNENWKIRDMASRVLHMLSENFEEEIRKLLDLASIAKQNQLHGHLLALQQLVPQYLSGTRDMELIQRILEKKRMLLLENKCFITKKAYLKLTCCILETCDIPDSILKDYISTLRNTFIAENNEYVVDGSKQLYLAQILDMLLKYEDSIYLDDICLLGLYSPFYEAQLSTLQYMNTNFHWETTRNSEFLEQLQLLLRVPDLLPMAKALVVKILSRKKNTLSLTTCTDLLKTNNSEDTKLAAVSSLSAKLSSQTFHQVWNLLQGFFADSCSKDFRLASLECLTAYPESCKNSRILLQLYNFLWDDDSEIREKASFYLNKNFIQTADWEYNRNTSVTALIFTKKFVDVFTSSEVVEELCLQLFQYLNEYDMFAAEESAKNCLFTIEKDNQFINELQKAMHILNMIKLTGRDISKCYKDQIHHLKSALLEHFNTEDFKDSPLGWCSNAEIFSRITLLKELIQHYSPSDYENFINVLTKHSVHPLIISYSQL.

The segment at 748-754 is required for activity; the sequence is RRSGGLP.

The protein belongs to the THADA family. As to quaternary structure, interacts with TRM7; for 2'-O-methylation of position 32 in substrate tRNAs.

The protein localises to the cytoplasm. Functionally, together with methyltransferase TRM7, methylates the 2'-O-ribose of nucleotides at position 32 of the anticodon loop of substrate tRNAs. The sequence is that of tRNA (32-2'-O)-methyltransferase regulator TRM732 (TRM732) from Saccharomyces cerevisiae (strain ATCC 204508 / S288c) (Baker's yeast).